A 118-amino-acid polypeptide reads, in one-letter code: DNA-binding protein MmarC6_0793 (118 aa).

The span at 1 to 12 (MNPEEIRQRRLQ) shows a compositional bias: basic and acidic residues. A disordered region spans residues 1–33 (MNPEEIRQRRLQEMQAKAQEQGAQDPEAQRQMQ). Residues 24-33 (QDPEAQRQMQ) are compositionally biased toward low complexity.

Belongs to the PDCD5 family.

This is DNA-binding protein MmarC6_0793 from Methanococcus maripaludis (strain C6 / ATCC BAA-1332).